The chain runs to 269 residues: Tryptophan synthase alpha chain (269 aa).

Active-site proton acceptor residues include Glu-49 and Asp-60.

It belongs to the TrpA family. In terms of assembly, tetramer of two alpha and two beta chains.

The catalysed reaction is (1S,2R)-1-C-(indol-3-yl)glycerol 3-phosphate + L-serine = D-glyceraldehyde 3-phosphate + L-tryptophan + H2O. The protein operates within amino-acid biosynthesis; L-tryptophan biosynthesis; L-tryptophan from chorismate: step 5/5. Its function is as follows. The alpha subunit is responsible for the aldol cleavage of indoleglycerol phosphate to indole and glyceraldehyde 3-phosphate. The sequence is that of Tryptophan synthase alpha chain from Ectopseudomonas mendocina (strain ymp) (Pseudomonas mendocina).